The following is a 65-amino-acid chain: Protein TrbD (65 aa).

The protein is Protein TrbD (trbD) of Escherichia coli (strain K12).